The sequence spans 430 residues: MANIVVVGTQWGDEGKGKIVDMLAEKADMVTRFQGGNNAGHTVVVDGTQTITHLIPSGILQNKTCLIGNGVVVDPKVLLEEVDKLLGMGVEINADNLLISERAQIIMPYHQAMDHAREAKKGAQKIGTTGRGIGPCYEDKAARKGVRFVDLLDPAVFDSMVREACEEKNFLLTEFFKADPVDPDAIIAEYTEYAKRLAPHVVDVSVVLNQGVKDGKQVLFEGAQGTHLDIDHGTYPFVTSSNTVAGNVCAGSGVGPGQVNEVLGIVKAYTTRVGMGPFPTELEDEVGNRIQEKGAEFGATTGRRRRCGWLDMVLLEATARLNGLTGVAITKLDVLGGLDSLNICTAYECEGETLNFFPADLKVLAKCKPVYETMPGWTEDISGVRNFDDLPENARNYLNRVEELLGAPIKIISVGPGRDETMVVKDPFAG.

Residues 12 to 18 (GDEGKGK) and 40 to 42 (GHT) contribute to the GTP site. The Proton acceptor role is filled by Asp-13. Asp-13 and Gly-40 together coordinate Mg(2+). IMP-binding positions include 13 to 16 (DEGK), 38 to 41 (NAGH), Thr-129, Arg-143, Gln-224, Thr-239, and Arg-303. The Proton donor role is filled by His-41. 299 to 305 (ATTGRRR) contacts substrate. GTP contacts are provided by residues Arg-305, 331-333 (KLD), and 413-415 (SVG).

Belongs to the adenylosuccinate synthetase family. Homodimer. The cofactor is Mg(2+).

The protein resides in the cytoplasm. The enzyme catalyses IMP + L-aspartate + GTP = N(6)-(1,2-dicarboxyethyl)-AMP + GDP + phosphate + 2 H(+). It functions in the pathway purine metabolism; AMP biosynthesis via de novo pathway; AMP from IMP: step 1/2. Its function is as follows. Plays an important role in the de novo pathway of purine nucleotide biosynthesis. Catalyzes the first committed step in the biosynthesis of AMP from IMP. In Desulfatibacillum aliphaticivorans, this protein is Adenylosuccinate synthetase.